The chain runs to 343 residues: Uroporphyrinogen decarboxylase (343 aa).

Residues 24–28 (RQAGR), Phe-43, Asp-74, Tyr-151, Ser-206, and His-321 contribute to the substrate site.

The protein belongs to the uroporphyrinogen decarboxylase family. As to quaternary structure, homodimer.

It localises to the cytoplasm. It carries out the reaction uroporphyrinogen III + 4 H(+) = coproporphyrinogen III + 4 CO2. The protein operates within porphyrin-containing compound metabolism; protoporphyrin-IX biosynthesis; coproporphyrinogen-III from 5-aminolevulinate: step 4/4. Its function is as follows. Catalyzes the decarboxylation of four acetate groups of uroporphyrinogen-III to yield coproporphyrinogen-III. This chain is Uroporphyrinogen decarboxylase, found in Thermosynechococcus vestitus (strain NIES-2133 / IAM M-273 / BP-1).